We begin with the raw amino-acid sequence, 223 residues long: Membrane-associated progesterone receptor component 2 (223 aa).

The disordered stretch occupies residues 1 to 33 (MAAGDGDVKLGTLGSGSESSNDGGSESPGDAGA). The O-linked (Xyl...) (chondroitin sulfate) serine glycan is linked to Ser-15. Positions 15 to 33 (SGSESSNDGGSESPGDAGA) are enriched in low complexity. A helical transmembrane segment spans residues 42 to 66 (AAALALLTGGGEMLLNVALVALVLL). Ser-90, Ser-104, and Ser-208 each carry phosphoserine. The 100-residue stretch at 102–201 (DFSLEQLRQY…EKYDYVGRLL (100 aa)) folds into the Cytochrome b5 heme-binding domain. Positions 202-223 (KPGEEPSEYTDEEDTKDHNKQD) are disordered. The segment covering 206 to 215 (EPSEYTDEED) has biased composition (acidic residues). Residue Tyr-210 is modified to Phosphotyrosine. Thr-211 is modified (phosphothreonine).

Belongs to the cytochrome b5 family. MAPR subfamily. As to quaternary structure, interacts with PGRMC1. Interacts with AAAS. Expressed by endometrial glands and stroma (at protein level). Detected in urine (at protein level).

The protein resides in the membrane. The protein localises to the nucleus envelope. Its subcellular location is the endoplasmic reticulum. It is found in the secreted. In terms of biological role, required for the maintenance of uterine histoarchitecture and normal female reproductive lifespan. May serve as a universal non-classical progesterone receptor in the uterus. Intracellular heme chaperone required for delivery of labile, or signaling heme, to the nucleus. Plays a role in adipocyte function and systemic glucose homeostasis. In brown fat, which has a high demand for heme, delivery of labile heme in the nucleus regulates the activity of heme-responsive transcriptional repressors such as NR1D1 and BACH1. In Homo sapiens (Human), this protein is Membrane-associated progesterone receptor component 2.